We begin with the raw amino-acid sequence, 1062 residues long: Carbamoyl phosphate synthase large chain (1062 aa).

A carboxyphosphate synthetic domain region spans residues 1-401; that stretch reads MPKRKDIHKI…AMQKAVRSLE (401 aa). Residues Arg-129, Arg-169, Gly-175, Gly-176, Lys-208, Ile-210, Glu-215, Gly-241, Ile-242, His-243, Gln-284, and Glu-298 each contribute to the ATP site. One can recognise an ATP-grasp 1 domain in the interval 133–327; that stretch reads KNLCKELGEP…IAKMAAKIAV (195 aa). Mg(2+) is bound by residues Gln-284, Glu-298, and Asn-300. The Mn(2+) site is built by Gln-284, Glu-298, and Asn-300. The interval 402-546 is oligomerization domain; it reads IDEKDLYSEE…YSTYDAENES (145 aa). The carbamoyl phosphate synthetic domain stretch occupies residues 547 to 929; the sequence is HRSGKKSVIV…ALYKAFAGAK (383 aa). The ATP-grasp 2 domain occupies 671-861; that stretch reads DDIIKELKLN…MAQVATRVIM (191 aa). Arg-707, Asp-746, Leu-748, Glu-752, Gly-777, Val-778, His-779, Ser-780, Gln-820, and Glu-832 together coordinate ATP. Mg(2+)-binding residues include Gln-820, Glu-832, and Asn-834. Residues Gln-820, Glu-832, and Asn-834 each contribute to the Mn(2+) site. The MGS-like domain occupies 930 to 1062; the sequence is MQLPENGNVL…NRSFATDALQ (133 aa). The allosteric domain stretch occupies residues 930–1062; the sequence is MQLPENGNVL…NRSFATDALQ (133 aa).

The protein belongs to the CarB family. In terms of assembly, composed of two chains; the small (or glutamine) chain promotes the hydrolysis of glutamine to ammonia, which is used by the large (or ammonia) chain to synthesize carbamoyl phosphate. Tetramer of heterodimers (alpha,beta)4. Mg(2+) serves as cofactor. The cofactor is Mn(2+).

The enzyme catalyses hydrogencarbonate + L-glutamine + 2 ATP + H2O = carbamoyl phosphate + L-glutamate + 2 ADP + phosphate + 2 H(+). It catalyses the reaction hydrogencarbonate + NH4(+) + 2 ATP = carbamoyl phosphate + 2 ADP + phosphate + 2 H(+). Its pathway is amino-acid biosynthesis; L-arginine biosynthesis; carbamoyl phosphate from bicarbonate: step 1/1. It participates in pyrimidine metabolism; UMP biosynthesis via de novo pathway; (S)-dihydroorotate from bicarbonate: step 1/3. Its function is as follows. Large subunit of the glutamine-dependent carbamoyl phosphate synthetase (CPSase). CPSase catalyzes the formation of carbamoyl phosphate from the ammonia moiety of glutamine, carbonate, and phosphate donated by ATP, constituting the first step of 2 biosynthetic pathways, one leading to arginine and/or urea and the other to pyrimidine nucleotides. The large subunit (synthetase) binds the substrates ammonia (free or transferred from glutamine from the small subunit), hydrogencarbonate and ATP and carries out an ATP-coupled ligase reaction, activating hydrogencarbonate by forming carboxy phosphate which reacts with ammonia to form carbamoyl phosphate. This is Carbamoyl phosphate synthase large chain from Lactobacillus acidophilus (strain ATCC 700396 / NCK56 / N2 / NCFM).